The primary structure comprises 160 residues: MASGIARGRLAEERKSWRKNHPHGFVAKPETGQDGTVNLMVWHCTIPGKAGTDWEGGFFPLTMHFSEDYPSKPPKCKFPQGFFHPNVYPSGTVCLSILNEDYGWRPAITVKQILVGIQDLLDTPNPADPAQTDGYHLFCQDPVEYKKRVKLQSKQYPALV.

Ala-2 carries the post-translational modification N-acetylalanine. One can recognise a UBC core domain in the interval 5 to 158 (IARGRLAEER…VKLQSKQYPA (154 aa)). The active-site Glycyl thioester intermediate is Cys-94.

It belongs to the ubiquitin-conjugating enzyme family. In terms of assembly, interacts with SIZ1 (via PHD domain) and MMS21. Interacts with TCP14 and TCP15. Interacts with KIN10.

The protein operates within protein modification; protein sumoylation. Its function is as follows. SUMO-conjugating enzyme that accepts the SUMO proteins from the E1 SUMO-activating heterodimer SAE1/SAE2 and catalyzes its covalent attachment to other proteins with the E3 SUMO ligases SIZ1 and MMS21. Associates with SIZ1 for sumoylation of the transcription factor GTE3. The sequence is that of SUMO-conjugating enzyme SCE1 (SCE1) from Arabidopsis thaliana (Mouse-ear cress).